A 935-amino-acid chain; its full sequence is Isoleucine--tRNA ligase (935 aa).

The 'HIGH' region signature appears at 58–68; it reads PYANGSIHVGH. L-isoleucyl-5'-AMP is bound at residue Glu-558. The 'KMSKS' region signature appears at 599–603; the sequence is KMSKS. Lys-602 contacts ATP. Zn(2+) contacts are provided by Cys-897, Cys-900, Cys-917, and Cys-920.

Belongs to the class-I aminoacyl-tRNA synthetase family. IleS type 1 subfamily. As to quaternary structure, monomer. Zn(2+) is required as a cofactor.

It localises to the cytoplasm. The catalysed reaction is tRNA(Ile) + L-isoleucine + ATP = L-isoleucyl-tRNA(Ile) + AMP + diphosphate. Functionally, catalyzes the attachment of isoleucine to tRNA(Ile). As IleRS can inadvertently accommodate and process structurally similar amino acids such as valine, to avoid such errors it has two additional distinct tRNA(Ile)-dependent editing activities. One activity is designated as 'pretransfer' editing and involves the hydrolysis of activated Val-AMP. The other activity is designated 'posttransfer' editing and involves deacylation of mischarged Val-tRNA(Ile). The chain is Isoleucine--tRNA ligase from Francisella tularensis subsp. tularensis (strain WY96-3418).